A 199-amino-acid chain; its full sequence is uncharacterized protein (199 aa).

Residues phenylalanine 7–isoleucine 27 form a helical membrane-spanning segment.

The protein belongs to the band 7/mec-2 family.

The protein localises to the membrane. This is an uncharacterized protein from Methanocaldococcus jannaschii (strain ATCC 43067 / DSM 2661 / JAL-1 / JCM 10045 / NBRC 100440) (Methanococcus jannaschii).